Here is a 249-residue protein sequence, read N- to C-terminus: GTP cyclohydrolase III (249 aa).

The protein belongs to the archaeal-type GTP cyclohydrolase family.

It carries out the reaction GTP + 3 H2O = 2-amino-5-formylamino-6-(5-phospho-D-ribosylamino)pyrimidin-4(3H)-one + 2 phosphate + 2 H(+). Catalyzes the formation of 2-amino-5-formylamino-6-ribofuranosylamino-4(3H)-pyrimidinone ribonucleotide monophosphate and inorganic phosphate from GTP. Also has an independent pyrophosphate phosphohydrolase activity. This is GTP cyclohydrolase III from Methanothermobacter thermautotrophicus (strain ATCC 29096 / DSM 1053 / JCM 10044 / NBRC 100330 / Delta H) (Methanobacterium thermoautotrophicum).